Reading from the N-terminus, the 549-residue chain is Glucose-6-phosphate isomerase (549 aa).

Glu355 functions as the Proton donor in the catalytic mechanism. Catalysis depends on residues His387 and Lys515.

Belongs to the GPI family.

It localises to the cytoplasm. The enzyme catalyses alpha-D-glucose 6-phosphate = beta-D-fructose 6-phosphate. Its pathway is carbohydrate biosynthesis; gluconeogenesis. It participates in carbohydrate degradation; glycolysis; D-glyceraldehyde 3-phosphate and glycerone phosphate from D-glucose: step 2/4. In terms of biological role, catalyzes the reversible isomerization of glucose-6-phosphate to fructose-6-phosphate. This chain is Glucose-6-phosphate isomerase, found in Haemophilus influenzae (strain 86-028NP).